A 188-amino-acid chain; its full sequence is Der GTPase-activating protein YihI (188 aa).

2 disordered regions span residues M1–P80 and D162–F188. Positions T27 to D37 are enriched in basic and acidic residues. Over residues N47 to G57 the composition is skewed to polar residues.

The protein belongs to the YihI family. Interacts with Der.

A GTPase-activating protein (GAP) that modifies Der/EngA GTPase function. May play a role in ribosome biogenesis. The protein is Der GTPase-activating protein YihI of Yersinia pseudotuberculosis serotype O:1b (strain IP 31758).